Consider the following 505-residue polypeptide: Pleckstrin homology domain-containing family D member 1 (505 aa).

Positions 28 to 136 constitute a PH domain; sequence KVQLYGVLWK…WLEMLQESGK (109 aa). Residues 146-391 are a coiled coil; sequence EAMIKSLEAQ…KVRNKEKEER (246 aa). The disordered stretch occupies residues 264–284; it reads DKNQPQPLTNQSEQPPATDGL. The segment covering 267 to 278 has biased composition (polar residues); that stretch reads QPQPLTNQSEQP. Residue Arg502 is modified to Omega-N-methylarginine.

This sequence belongs to the PLEKHD1 family.

The protein is Pleckstrin homology domain-containing family D member 1 (Plekhd1) of Rattus norvegicus (Rat).